The primary structure comprises 447 residues: Phospholipase A(1) DAD1, chloroplastic (447 aa).

The transit peptide at 1–46 (MRFSLSPVRPHSVVVPSLPKQDVVSYISGTTSNRQCRCVLTLPSPS) directs the protein to the chloroplast. The GXSXG motif lies at 293 to 297 (GHSLG). The active-site Acyl-ester intermediate is the S295. Catalysis depends on charge relay system residues D352 and H418.

Belongs to the AB hydrolase superfamily. Lipase family. In terms of tissue distribution, expressed in flower buds, but not in leaves or roots. Restricted to the stamen filaments immediately before flower opening.

Its subcellular location is the plastid. It localises to the chloroplast. The catalysed reaction is a 1,2-diacyl-sn-glycero-3-phosphocholine + H2O = a 2-acyl-sn-glycero-3-phosphocholine + a fatty acid + H(+). The enzyme catalyses 1-hexadecanoyl-2-(9Z,12Z-octadecadienoyl)-sn-glycero-3-phosphocholine + H2O = 2-(9Z,12Z-octadecadienoyl)-sn-glycero-3-phosphocholine + hexadecanoate + H(+). Functionally, sn-1-specific phospholipase that releases free fatty acids from phospholipids. Low activity on galactolipids and triacylglycerols. Catalyzes the initial step of jasmonic acid biosynthesis. Not essential for jasmonate biosynthesis after wounding or upon pathogen infection. This Arabidopsis thaliana (Mouse-ear cress) protein is Phospholipase A(1) DAD1, chloroplastic.